Here is a 915-residue protein sequence, read N- to C-terminus: Alanine--tRNA ligase (915 aa).

4 residues coordinate Zn(2+): histidine 609, histidine 613, cysteine 712, and histidine 716.

It belongs to the class-II aminoacyl-tRNA synthetase family. Requires Zn(2+) as cofactor.

It is found in the cytoplasm. It carries out the reaction tRNA(Ala) + L-alanine + ATP = L-alanyl-tRNA(Ala) + AMP + diphosphate. Its function is as follows. Catalyzes the attachment of alanine to tRNA(Ala) in a two-step reaction: alanine is first activated by ATP to form Ala-AMP and then transferred to the acceptor end of tRNA(Ala). Also edits incorrectly charged Ser-tRNA(Ala) and Gly-tRNA(Ala) via its editing domain. In Methanoculleus marisnigri (strain ATCC 35101 / DSM 1498 / JR1), this protein is Alanine--tRNA ligase.